A 219-amino-acid chain; its full sequence is Proteasome subunit beta type-9 (219 aa).

Positions Met1–Gly20 are cleaved as a propeptide — removed in mature form. Residue Thr21 is the Nucleophile of the active site. N6-acetyllysine occurs at positions 53 and 109.

This sequence belongs to the peptidase T1B family. As to quaternary structure, the 26S proteasome consists of a 20S proteasome core and two 19S regulatory subunits. The 20S proteasome core is composed of 28 subunits that are arranged in four stacked rings, resulting in a barrel-shaped structure. The two end rings are each formed by seven alpha subunits, and the two central rings are each formed by seven beta subunits. The catalytic chamber with the active sites is on the inside of the barrel. Component of the immunoproteasome, where it displaces the equivalent housekeeping subunit PSMB6. Component of the spermatoproteasome, a form of the proteasome specifically found in testis. Autocleaved. The resulting N-terminal Thr residue of the mature subunit is responsible for the nucleophile proteolytic activity.

Its subcellular location is the cytoplasm. The protein resides in the nucleus. The enzyme catalyses Cleavage of peptide bonds with very broad specificity.. The proteasome is a multicatalytic proteinase complex which is characterized by its ability to cleave peptides with Arg, Phe, Tyr, Leu, and Glu adjacent to the leaving group at neutral or slightly basic pH. The proteasome has an ATP-dependent proteolytic activity. This subunit is involved in antigen processing to generate class I binding peptides. The protein is Proteasome subunit beta type-9 (PSMB9) of Bos taurus (Bovine).